Consider the following 663-residue polypeptide: A-type ATP synthase subunit I (663 aa).

The next 7 helical transmembrane spans lie at Phe376–Ala396, Phe412–Ser432, Leu468–Ile488, Gly497–Ser517, Ile534–Ile554, Ala568–Val588, and Gly589–Phe609.

It belongs to the V-ATPase 116 kDa subunit family. Has multiple subunits with at least A(3), B(3), C, D, E, F, H, I and proteolipid K(x).

The protein localises to the cell membrane. Component of the A-type ATP synthase that produces ATP from ADP in the presence of a proton gradient across the membrane. This is A-type ATP synthase subunit I from Thermococcus kodakarensis (strain ATCC BAA-918 / JCM 12380 / KOD1) (Pyrococcus kodakaraensis (strain KOD1)).